The following is a 613-amino-acid chain: MFNMNVDESASGALGSSAIPVHPTPASVRLFEILQGKYAYVQGQTIYANLRNPGVFSRQVFTHLFKRAISHCTYDDVLHDWNKFEACIQKRWPSDDSCASRFRESTFESWSTTMKLTVRDLLTTNIYRVLHSRSVLSYERYVDWICATGMVPAVKKPITQELHSKIKSLRDRCVCRELGHERTIRSIGTELYEATREIIESLNSTFIPQFTEVTIEYLPGSDEYVAYYCGRRIRLHVLFPPAIFAGTVTFDSPVQRLYQNIFMCYRTLEHAKICQLLNTAPLKAIVGHGGRDMYKDILAHLEQNSQRKDPKKELLNLLVKLSENKTISGVTDVVEEFITDASNNLVDRNRLFGQPGETAAQGLKKKVSNTVVKCLTDQINEQFDQINGLEKERELYLKKIRSMESQLQASLGPGGNNPAASAPAAVAAEAASVDILTGSTASAIEKLFNSPSASLGARVSGHNESILNSFVSQYIPPSREMTKDLTELWESELFNTFKLTPVVDNQGQRLYVRYSSDTISILLGPFTYLVAELSPVELVTDVYATLGIVEIIDELYRSSRLAIYIEDLGRKYCPASATGGDHGIRQAPSARGDAEPDHAKSKPARDPPPGAGS.

A disordered region spans residues 577 to 613 (ATGGDHGIRQAPSARGDAEPDHAKSKPARDPPPGAGS). The span at 592 to 605 (GDAEPDHAKSKPAR) shows a compositional bias: basic and acidic residues.

This sequence belongs to the herpesviridae portal protein family. In terms of assembly, homododecamerizes. Interacts with terminase subunits TRM1 and TRM3.

The protein localises to the virion. The protein resides in the host nucleus. In terms of biological role, forms a portal in the viral capsid through which viral DNA is translocated during DNA packaging. Assembles as a dodecamer at a single fivefold axe of the T=16 icosahedric capsid. Binds to the molecular motor that translocates the viral DNA, termed terminase. This is Portal protein from Homo sapiens (Human).